Here is a 436-residue protein sequence, read N- to C-terminus: Histidinol dehydrogenase (436 aa).

Substrate contacts are provided by Ser-242, Gln-264, and His-267. Zn(2+) contacts are provided by Gln-264 and His-267. Active-site proton acceptor residues include Glu-332 and His-333. Residues His-333, Asp-366, Glu-420, and His-425 each contribute to the substrate site. A Zn(2+)-binding site is contributed by Asp-366. His-425 contacts Zn(2+).

Belongs to the histidinol dehydrogenase family. The cofactor is Zn(2+).

The catalysed reaction is L-histidinol + 2 NAD(+) + H2O = L-histidine + 2 NADH + 3 H(+). The protein operates within amino-acid biosynthesis; L-histidine biosynthesis; L-histidine from 5-phospho-alpha-D-ribose 1-diphosphate: step 9/9. Catalyzes the sequential NAD-dependent oxidations of L-histidinol to L-histidinaldehyde and then to L-histidine. The protein is Histidinol dehydrogenase of Nitratidesulfovibrio vulgaris (strain ATCC 29579 / DSM 644 / CCUG 34227 / NCIMB 8303 / VKM B-1760 / Hildenborough) (Desulfovibrio vulgaris).